A 281-amino-acid chain; its full sequence is Pantothenate synthetase (281 aa).

Residue 30–37 participates in ATP binding; sequence MGYLHEGH. H37 (proton donor) is an active-site residue. Q61 contributes to the (R)-pantoate binding site. Position 61 (Q61) interacts with beta-alanine. 147–150 provides a ligand contact to ATP; sequence GEKD. Residue Q153 participates in (R)-pantoate binding. ATP is bound by residues I176 and 184–187; that span reads KSSR.

This sequence belongs to the pantothenate synthetase family. Homodimer.

The protein localises to the cytoplasm. It catalyses the reaction (R)-pantoate + beta-alanine + ATP = (R)-pantothenate + AMP + diphosphate + H(+). Its pathway is cofactor biosynthesis; (R)-pantothenate biosynthesis; (R)-pantothenate from (R)-pantoate and beta-alanine: step 1/1. Functionally, catalyzes the condensation of pantoate with beta-alanine in an ATP-dependent reaction via a pantoyl-adenylate intermediate. The chain is Pantothenate synthetase from Clostridium botulinum (strain Langeland / NCTC 10281 / Type F).